The sequence spans 127 residues: Major sperm protein 33 (127 aa).

Residue A2 is modified to N-acetylalanine. Positions 9 to 126 (DIQTQPGTKI…RRKNLPIEYN (118 aa)) constitute an MSP domain.

Sperm.

It is found in the cell projection. It localises to the pseudopodium. The protein resides in the cytoplasm. The protein localises to the cytoskeleton. Functionally, central component in molecular interactions underlying sperm crawling. Forms an extensive filament system that extends from sperm villipoda, along the leading edge of the pseudopod. This Caenorhabditis elegans protein is Major sperm protein 33 (msp-33).